The chain runs to 710 residues: MSKQTFTTTFAGKPLVVEVGQVAKQANGATVVRYGDSTVLTAAVMSKKMATGDFFPLQVNYEEKMYAAGKFPGGFMKREGRPSTDATLTARLIDRPIRPMFAEGFRNEVQVINTVLSYDENASAPMAAMFGSSLALSISDIPFNGPIAGVQVGYIDGEFIINPDKEQMEASLLELTVAGSKEAINMVESGAKELSEDIMLEALLKGHQAIQELIAFQEQIVAVVGKEKAEVELLQVDADLQADIVAKYNAQLQKAVQVEEKKAREAATEAVKEMVKAEYEERYAEDENLATIMRDVAEILEQMEHAEVRRLITEDKIRPDGRKIDEIRPLDAVVDFLPKVHGSGLFTRGQTQALSVLTLAPMGETQIIDGLAPEYKKRFLHHYNFPQYSVGETGRYGAAGRREIGHGALGERALEQVLPSLEEFPYAIRLVAEVLESNGSSSQASICAGTLALMAGGVPIKAPVAGIAMGLISDGINYTVLTDIQGLEDHFGDMDFKVAGTREGITALQMDIKIAGITPQILEEALAQAKKARFEILDVIEATIAEPRPELAPTAPKIDTIKIDVDKIKVVIGKGGETIDKIIAETGVKIDIDDEGNVSIYSSDQAAIDRTKEIIAGLVREAKVGEVYHAKVVRIEKFGAFVNLFDKTDALVHISEIAWTRTTNVSDVLEVGEDVDVKVIKIDEKGRVDASMKALIPRPPKPEKKEEKHD.

Aspartate 489 and aspartate 495 together coordinate Mg(2+). A KH domain is found at 556–615; sequence PKIDTIKIDVDKIKVVIGKGGETIDKIIAETGVKIDIDDEGNVSIYSSDQAAIDRTKEII. The S1 motif domain maps to 625 to 693; the sequence is GEVYHAKVVR…EKGRVDASMK (69 aa). The disordered stretch occupies residues 691–710; the sequence is SMKALIPRPPKPEKKEEKHD. Basic and acidic residues predominate over residues 700 to 710; that stretch reads PKPEKKEEKHD.

Belongs to the polyribonucleotide nucleotidyltransferase family. It depends on Mg(2+) as a cofactor.

The protein localises to the cytoplasm. The enzyme catalyses RNA(n+1) + phosphate = RNA(n) + a ribonucleoside 5'-diphosphate. In terms of biological role, involved in mRNA degradation. Catalyzes the phosphorolysis of single-stranded polyribonucleotides processively in the 3'- to 5'-direction. This chain is Polyribonucleotide nucleotidyltransferase, found in Streptococcus pyogenes serotype M49 (strain NZ131).